The following is a 633-amino-acid chain: GTPase-activating protein GYP3 (633 aa).

The disordered stretch occupies residues 26 to 127; it reads AFTVKSPSVP…HSDDLDLVPD (102 aa). Residues 37–47 are compositionally biased toward basic and acidic residues; sequence FHDKMHSDHSS. Positions 99–115 are enriched in acidic residues; it reads GEDDDDNNGDNGNEDLE. The residue at position 147 (Ser147) is a Phosphoserine. Residues 223–456 form the Rab-GAP TBC domain; sequence GIPAEWRGNA…RIWDCLFYEE (234 aa). Ser484 carries the post-translational modification Phosphoserine.

The protein localises to the cytoplasm. It is found in the bud. The protein resides in the bud neck. Regulates exocytosis by functioning as a GAP for SEC4. Stimulates specifically the GTPase activity of YPT6. Also required for efficient polarization of the actin patches. This is GTPase-activating protein GYP3 (MSB3) from Saccharomyces cerevisiae (strain ATCC 204508 / S288c) (Baker's yeast).